The following is a 58-amino-acid chain: MAVPKKKTSKSKRDKRKATWKRKAALQAQRALSLGKSVLTGRAKGFVYPAQDEEETEE.

The segment at 1–24 (MAVPKKKTSKSKRDKRKATWKRKA) is disordered.

It belongs to the bacterial ribosomal protein bL32 family.

The sequence is that of Large ribosomal subunit protein bL32 from Synechococcus sp. (strain ATCC 27144 / PCC 6301 / SAUG 1402/1) (Anacystis nidulans).